The chain runs to 224 residues: 4'-phosphopantetheinyl transferase (224 aa).

The Mg(2+) site is built by Asp-107, Glu-109, and Glu-151. The tract at residues 158–189 (GKGLSLPLDSFSVRLKDDGHVSIELPDGHEPC) is peptidyl carrier protein binding.

Belongs to the P-Pant transferase superfamily. Gsp/Sfp/HetI/AcpT family. The cofactor is Mg(2+).

It carries out the reaction apo-[peptidyl-carrier protein] + CoA = holo-[peptidyl-carrier protein] + adenosine 3',5'-bisphosphate + H(+). In terms of biological role, may activate the peptidyl carrier protein (PCP) domains of surfactin synthetase SRF1/2/3 and iturin A synthetase, by transferring the 4'-phosphopantetheinyl moiety of coenzyme A (CoA) to a serine residue. Required for the coproduction of the lipopeptide antibiotics, iturin A and surfactin. This is 4'-phosphopantetheinyl transferase (lpa-14) from Bacillus subtilis.